Reading from the N-terminus, the 255-residue chain is Indole-3-glycerol phosphate synthase (255 aa).

Belongs to the TrpC family.

It carries out the reaction 1-(2-carboxyphenylamino)-1-deoxy-D-ribulose 5-phosphate + H(+) = (1S,2R)-1-C-(indol-3-yl)glycerol 3-phosphate + CO2 + H2O. The protein operates within amino-acid biosynthesis; L-tryptophan biosynthesis; L-tryptophan from chorismate: step 4/5. The chain is Indole-3-glycerol phosphate synthase from Streptococcus pneumoniae (strain Hungary19A-6).